The sequence spans 413 residues: Aspartate aminotransferase, cytoplasmic (413 aa).

2 residues coordinate L-aspartate: G39 and W141. The residue at position 149 (S149) is a Phosphoserine. N195 contacts L-aspartate. K259 is modified (N6-(pyridoxal phosphate)lysine). Residue R387 coordinates L-aspartate.

Belongs to the class-I pyridoxal-phosphate-dependent aminotransferase family. As to quaternary structure, homodimer. Pyridoxal 5'-phosphate serves as cofactor.

It localises to the cytoplasm. The enzyme catalyses L-aspartate + 2-oxoglutarate = oxaloacetate + L-glutamate. It catalyses the reaction L-cysteine + 2-oxoglutarate = 2-oxo-3-sulfanylpropanoate + L-glutamate. It carries out the reaction (2S)-2-aminobutanoate + 2-oxoglutarate = 2-oxobutanoate + L-glutamate. The catalysed reaction is 3-sulfino-L-alanine + 2-oxoglutarate = 3-sulfinopyruvate + L-glutamate. Its function is as follows. Biosynthesis of L-glutamate from L-aspartate or L-cysteine. Important regulator of levels of glutamate, the major excitatory neurotransmitter of the vertebrate central nervous system. Acts as a scavenger of glutamate in brain neuroprotection. The aspartate aminotransferase activity is involved in hepatic glucose synthesis during development and in adipocyte glyceroneogenesis. Using L-cysteine as substrate, regulates levels of mercaptopyruvate, an important source of hydrogen sulfide. Mercaptopyruvate is converted into H(2)S via the action of 3-mercaptopyruvate sulfurtransferase (3MST). Hydrogen sulfide is an important synaptic modulator and neuroprotectant in the brain. This is Aspartate aminotransferase, cytoplasmic from Macaca fascicularis (Crab-eating macaque).